A 342-amino-acid chain; its full sequence is Polygalacturonase inhibitor 1 (342 aa).

Positions 1–29 are cleaved as a signal peptide; it reads MTQFNIPVTMSSSLSIILVILVSLRTALS. Intrachain disulfides connect Cys-32–Cys-62 and Cys-63–Cys-72. Asn-64 carries an N-linked (GlcNAc...) asparagine glycan. 10 LRR repeats span residues 82-107, 108-132, 133-156, 157-180, 181-205, 206-228, 229-252, 253-275, 276-299, and 300-319; these read NNLDLSGHNLPKPYPIPSSLANLPYL, NFLYIGGINNLVGPIPPAIAKLTQL, HYLYITHTNVSGAIPDFLSQIKTL, VTLDFSYNALSGTLPPSISSLPNL, GGITFDGNRISGAIPDSYGSFSKLF, TAMTISRNRLTGKIPPTFANLNL, AFVDLSRNMLEGDASVLFGSDKNT, KKIHLAKNSLAFDLGKVGLSKNL, NGLDLRNNRIYGTLPQGLTQLKFL, and QSLNVSFNNLCGEIPQGGNL. Residue Asn-141 is glycosylated (N-linked (GlcNAc...) asparagine). Asn-303 carries N-linked (GlcNAc...) asparagine glycosylation. Intrachain disulfides connect Cys-310-Cys-332 and Cys-334-Cys-341.

Belongs to the polygalacturonase-inhibiting protein family.

Its subcellular location is the secreted. It is found in the cell wall. The protein localises to the membrane. Functionally, inhibitor of fungal polygalacturonase. It is an important factor for plant resistance to phytopathogenic fungi. Substrate preference is polygalacturonase (PG) from A.niger &gt;&gt; PG of F.oxysporum, A.solani or B.cinerea. Not active on PG from F.moniliforme. This chain is Polygalacturonase inhibitor 1 (PGIP1), found in Phaseolus vulgaris (Kidney bean).